An 87-amino-acid polypeptide reads, in one-letter code: MRLILSLPVLAVVLAMVLEGPAPAQADPHISSSLESIPGKLKEFGSTVEEKFRTAIDHIKKSEFSEKTQNWFSELFHKVKEKFETTF.

The first 26 residues, 1–26 (MRLILSLPVLAVVLAMVLEGPAPAQA), serve as a signal peptide directing secretion.

It belongs to the apolipoprotein C1 family.

The protein localises to the secreted. Inhibitor of lipoprotein binding to the low density lipoprotein (LDL) receptor, LDL receptor-related protein, and very low density lipoprotein (VLDL) receptor. Associates with high density lipoproteins (HDL) and the triacylglycerol-rich lipoproteins in the plasma and makes up about 10% of the protein of the VLDL and 2% of that of HDL. Appears to interfere directly with fatty acid uptake and is also the major plasma inhibitor of cholesteryl ester transfer protein (CETP). Binds free fatty acids and reduces their intracellular esterification. Modulates the interaction of APOE with beta-migrating VLDL and inhibits binding of beta-VLDL to the LDL receptor-related protein. The polypeptide is Apolipoprotein C-I (APOC1) (Pteropus vampyrus (Large flying fox)).